The following is a 391-amino-acid chain: Histidinol-phosphate aminotransferase (391 aa).

Lysine 246 carries the post-translational modification N6-(pyridoxal phosphate)lysine.

Belongs to the class-II pyridoxal-phosphate-dependent aminotransferase family. Histidinol-phosphate aminotransferase subfamily. Pyridoxal 5'-phosphate is required as a cofactor.

The catalysed reaction is L-histidinol phosphate + 2-oxoglutarate = 3-(imidazol-4-yl)-2-oxopropyl phosphate + L-glutamate. Its pathway is amino-acid biosynthesis; L-histidine biosynthesis; L-histidine from 5-phospho-alpha-D-ribose 1-diphosphate: step 7/9. The protein is Histidinol-phosphate aminotransferase of Methanopyrus kandleri (strain AV19 / DSM 6324 / JCM 9639 / NBRC 100938).